The chain runs to 504 residues: Glycerol kinase (504 aa).

Threonine 13 is a binding site for ADP. The ATP site is built by threonine 13, threonine 14, and serine 15. Threonine 13 is a binding site for sn-glycerol 3-phosphate. Arginine 17 is a binding site for ADP. Residues arginine 83, glutamate 84, and tyrosine 135 each coordinate sn-glycerol 3-phosphate. Glycerol is bound by residues arginine 83, glutamate 84, and tyrosine 135. Histidine 231 is modified (phosphohistidine; by HPr). Aspartate 245 provides a ligand contact to sn-glycerol 3-phosphate. The glycerol site is built by aspartate 245 and glutamine 246. ADP-binding residues include threonine 267 and glycine 310. ATP is bound by residues threonine 267, glycine 310, glutamine 314, and glycine 411. The ADP site is built by glycine 411 and asparagine 415.

It belongs to the FGGY kinase family. In terms of assembly, homotetramer and homodimer (in equilibrium). In terms of processing, the phosphoenolpyruvate-dependent sugar phosphotransferase system (PTS), including enzyme I, and histidine-containing protein (HPr) are required for the phosphorylation, which leads to the activation of the enzyme.

It carries out the reaction glycerol + ATP = sn-glycerol 3-phosphate + ADP + H(+). It participates in polyol metabolism; glycerol degradation via glycerol kinase pathway; sn-glycerol 3-phosphate from glycerol: step 1/1. Activated by phosphorylation and inhibited by fructose 1,6-bisphosphate (FBP). Its function is as follows. Key enzyme in the regulation of glycerol uptake and metabolism. Catalyzes the phosphorylation of glycerol to yield sn-glycerol 3-phosphate. The polypeptide is Glycerol kinase (Ligilactobacillus salivarius (strain UCC118) (Lactobacillus salivarius)).